Reading from the N-terminus, the 186-residue chain is Threonylcarbamoyl-AMP synthase (186 aa).

Positions 2-186 constitute a YrdC-like domain; the sequence is PNEFELAVAA…ARTGAIIRPS (185 aa).

This sequence belongs to the SUA5 family. TsaC subfamily.

The protein localises to the cytoplasm. The catalysed reaction is L-threonine + hydrogencarbonate + ATP = L-threonylcarbamoyladenylate + diphosphate + H2O. Required for the formation of a threonylcarbamoyl group on adenosine at position 37 (t(6)A37) in tRNAs that read codons beginning with adenine. Catalyzes the conversion of L-threonine, HCO(3)(-)/CO(2) and ATP to give threonylcarbamoyl-AMP (TC-AMP) as the acyladenylate intermediate, with the release of diphosphate. The chain is Threonylcarbamoyl-AMP synthase from Aeromonas hydrophila subsp. hydrophila (strain ATCC 7966 / DSM 30187 / BCRC 13018 / CCUG 14551 / JCM 1027 / KCTC 2358 / NCIMB 9240 / NCTC 8049).